A 407-amino-acid polypeptide reads, in one-letter code: Imidazolonepropionase (407 aa).

2 residues coordinate Fe(3+): His-72 and His-74. 2 residues coordinate Zn(2+): His-72 and His-74. Residues Arg-81, Tyr-144, and His-177 each coordinate 4-imidazolone-5-propanoate. Tyr-144 is an N-formimidoyl-L-glutamate binding site. His-242 contacts Fe(3+). A Zn(2+)-binding site is contributed by His-242. 4-imidazolone-5-propanoate is bound at residue Gln-245. Residue Asp-317 participates in Fe(3+) binding. Asp-317 provides a ligand contact to Zn(2+). Residues Asn-319 and Gly-321 each coordinate N-formimidoyl-L-glutamate. Thr-322 contacts 4-imidazolone-5-propanoate.

This sequence belongs to the metallo-dependent hydrolases superfamily. HutI family. It depends on Zn(2+) as a cofactor. Requires Fe(3+) as cofactor.

The protein localises to the cytoplasm. The enzyme catalyses 4-imidazolone-5-propanoate + H2O = N-formimidoyl-L-glutamate. Its pathway is amino-acid degradation; L-histidine degradation into L-glutamate; N-formimidoyl-L-glutamate from L-histidine: step 3/3. Functionally, catalyzes the hydrolytic cleavage of the carbon-nitrogen bond in imidazolone-5-propanoate to yield N-formimidoyl-L-glutamate. It is the third step in the universal histidine degradation pathway. The protein is Imidazolonepropionase of Aliivibrio salmonicida (strain LFI1238) (Vibrio salmonicida (strain LFI1238)).